The chain runs to 198 residues: Holliday junction resolvase RecU (198 aa).

A disordered region spans residues 1–21; it reads MVNYPHKLSSQKRQPSLSQPK. A compositionally biased stretch (polar residues) spans 11 to 21; sequence QKRQPSLSQPK. The Mg(2+) site is built by Thr-81, Asp-83, Glu-96, and Gln-115.

Belongs to the RecU family. Mg(2+) serves as cofactor.

The protein resides in the cytoplasm. The enzyme catalyses Endonucleolytic cleavage at a junction such as a reciprocal single-stranded crossover between two homologous DNA duplexes (Holliday junction).. In terms of biological role, endonuclease that resolves Holliday junction intermediates in genetic recombination. Cleaves mobile four-strand junctions by introducing symmetrical nicks in paired strands. Promotes annealing of linear ssDNA with homologous dsDNA. Required for DNA repair, homologous recombination and chromosome segregation. The polypeptide is Holliday junction resolvase RecU (Streptococcus pneumoniae (strain Taiwan19F-14)).